We begin with the raw amino-acid sequence, 74 residues long: Defensin Lc-def (74 aa).

A signal peptide spans 1–27 (MEKKTVAALSFLFIVLFVAQEIAVTEA). 4 disulfide bridges follow: Cys-30–Cys-74, Cys-41–Cys-62, Cys-47–Cys-68, and Cys-51–Cys-70.

It localises to the secreted. Functionally, has antifungal activity against the phytopathogenic fungus A.niger VKM F-2259, but not against A.alternata VKM F-3047. Does not inhibit trypsin or chymotrypsin. The chain is Defensin Lc-def from Lens culinaris subsp. culinaris (Cultivated lentil).